Consider the following 404-residue polypeptide: Argininosuccinate synthase (404 aa).

Residues 13–21 (AYSGGLDTS) and A41 each bind ATP. Residues Y93 and S98 each coordinate L-citrulline. G123 serves as a coordination point for ATP. Positions 125, 129, and 130 each coordinate L-aspartate. N129 serves as a coordination point for L-citrulline. L-citrulline contacts are provided by R133, S182, S191, E267, and Y279.

It belongs to the argininosuccinate synthase family. Type 1 subfamily. Homotetramer.

It localises to the cytoplasm. It catalyses the reaction L-citrulline + L-aspartate + ATP = 2-(N(omega)-L-arginino)succinate + AMP + diphosphate + H(+). It functions in the pathway amino-acid biosynthesis; L-arginine biosynthesis; L-arginine from L-ornithine and carbamoyl phosphate: step 2/3. The protein is Argininosuccinate synthase of Moritella profunda.